A 606-amino-acid polypeptide reads, in one-letter code: Mitogen-activated protein kinase kinase kinase 7 (606 aa).

Positions 1 to 300 are interaction with MAPK8IP1; it reads MSTASAASSS…FPGADEPLQY (300 aa). The Protein kinase domain maps to 36-291; the sequence is IEVEEVVGRG…KIMTHLMRYF (256 aa). ATP contacts are provided by residues 42-50 and lysine 63; that span reads VGRGAFGVV. Lysine 72 participates in a covalent cross-link: Glycyl lysine isopeptide (Lys-Gly) (interchain with G-Cter in ubiquitin). Aspartate 156 (proton acceptor) is an active-site residue. Lysine 158 participates in a covalent cross-link: Glycyl lysine isopeptide (Lys-Gly) (interchain with G-Cter in ubiquitin). A phosphothreonine; by autocatalysis mark is found at threonine 184 and threonine 187. At serine 192 the chain carries Phosphoserine; by autocatalysis. Residue lysine 209 forms a Glycyl lysine isopeptide (Lys-Gly) (interchain with G-Cter in ubiquitin) linkage. Disordered regions lie at residues 301-338 and 354-391; these read PCQY…MEQV and KNQA…MSAD. The segment covering 306-338 has biased composition (polar residues); the sequence is DEGQSNSATSTGSFMDIASTNTSNKSDTNMEQV. Residues 361 to 375 are compositionally biased toward low complexity; it reads SESGRLSLGASRGSS. Phosphoserine occurs at positions 367, 389, and 439. Positions 443 to 452 are enriched in polar residues; sequence LTVTGTEPGQ. Positions 443 to 493 are disordered; sequence LTVTGTEPGQVSSRSSSPSVRMITTSGPTSEKPTRSHPWTPDDSTDTNGSD. The span at 453–463 shows a compositional bias: low complexity; that stretch reads VSSRSSSPSVR. Phosphoserine is present on serine 455. Residues 464 to 473 show a composition bias toward polar residues; sequence MITTSGPTSE.

Belongs to the protein kinase superfamily. STE Ser/Thr protein kinase family. MAP kinase kinase kinase subfamily. Can form homodimer. Binds both upstream activators and downstream substrates in multimolecular complexes. Interacts with TAB1/MAP3K7IP1, TAB2/MAP3K7IP2 and TAB3/MAP3K7IP3. Identified in the TRIKA2 complex composed of MAP3K7/TAK1, TAB1/MAP3K7IP1 and TAB2/MAP3K7IP2. Interacts with PPM1L and PPM1B/PP2CB. Interaction with PP2A and PPP6C leads to its repressed activity. Interacts with TRAF6 and TAB1/MAP3K7IP1; during IL-1 signaling. Interacts with TAOK1 and TAOK2; interaction with TAOK2 interferes with MAP3K7 interaction with IKKA, thus preventing NF-kappa-B activation. Interacts with DYNC2I2 (via WD domains). Interacts with CYLD and RBCK1. Interacts with TGFBR1; induces MAP3K7/TAK1 activation by TRAF6. Interacts with MAPK8IP1 and SMAD6. Interacts with isoform 1 of VRK2. Interacts with DAB2; the interaction is induced by TGF-beta stimulation and may mediate TGF-beta stimulated JNK activation. Interacts with TRIM5. Part of a complex containing ITCH, NDFIP1 and MAP3K7. Interacts with IFIT5; the interaction synergizes the recruitment of IKK to MAP3K7 and enhances IKK phosphorylation. Interacts with PLEKHM1 (via N- and C-terminus). Found in a complex with SH3RF1, RAC2, MAP2K7/MKK7, MAPK8IP1/JIP1, MAPK8/JNK1 and MAPK9/JNK2. Interacts with SASH1. Interacts with RIPK1. Requires Mg(2+) as cofactor. Association with TAB1/MAP3K7IP1 promotes autophosphorylation at Ser-192 and subsequent activation. Association with TAB2/MAP3K7IP2, itself associated with free unanchored Lys-63 polyubiquitin chain, promotes autophosphorylation and subsequent activation of MAP3K7. Dephosphorylation at Ser-192 by PPM1B/PP2CB and at Thr-187 by PP2A and PPP6C leads to inactivation. Post-translationally, 'Lys-48'-linked polyubiquitination at Lys-72 is induced by TNFalpha, and leads to proteasomal degradation. Undergoes 'Lys-48'-linked polyubiquitination catalyzed by ITCH. 'Lys-63'-linked polyubiquitination at Lys-158 by TRIM8 does not lead to proteasomal degradation but contributes to autophosphorylation and activation. Deubiquitinated by CYLD, a protease that selectively cleaves 'Lys-63'-linked ubiquitin chains. Deubiquitinated by USP19; leading to negative regulation of TNF-alpha- and IL-1beta-triggered NF-kappa-B activation.

It is found in the cytoplasm. The protein resides in the cell membrane. It catalyses the reaction L-seryl-[protein] + ATP = O-phospho-L-seryl-[protein] + ADP + H(+). It carries out the reaction L-threonyl-[protein] + ATP = O-phospho-L-threonyl-[protein] + ADP + H(+). Activated by pro-inflammatory cytokines and in response to physical and chemical stresses, including osmotic stress, oxidative stress, arsenic and ultraviolet light irradiation. Activated by 'Lys-63'-linked polyubiquitination and by autophosphorylation. Association with TAB1/MAP3K7IP1 and TAB2/MAP3K7IP2 promotes activation through autophosphorylation, whereas PPM1B/PP2CB, PP2A and PPP6C dephosphorylation leads to inactivation. Ceramides are also able to activate MAP3K7/TAK1. Serine/threonine kinase which acts as an essential component of the MAP kinase signal transduction pathway. Plays an important role in the cascades of cellular responses evoked by changes in the environment. Mediates signal transduction of TRAF6, various cytokines including interleukin-1 (IL-1), transforming growth factor-beta (TGFB), TGFB-related factors like BMP2 and BMP4, toll-like receptors (TLR), tumor necrosis factor receptor CD40 and B-cell receptor (BCR). Once activated, acts as an upstream activator of the MKK/JNK signal transduction cascade and the p38 MAPK signal transduction cascade through the phosphorylation and activation of several MAP kinase kinases like MAP2K1/MEK1, MAP2K3/MKK3, MAP2K6/MKK6 and MAP2K7/MKK7. These MAP2Ks in turn activate p38 MAPKs and c-jun N-terminal kinases (JNKs); both p38 MAPK and JNK pathways control the transcription factors activator protein-1 (AP-1). Independently of MAP2Ks and p38 MAPKs, acts as a key activator of NF-kappa-B by promoting activation of the I-kappa-B-kinase (IKK) core complex. Mechanistically, recruited to polyubiquitin chains of RIPK2 and IKBKG/NEMO via TAB2/MAP3K7IP2 and TAB3/MAP3K7IP3, and catalyzes phosphorylation and activation of IKBKB/IKKB component of the IKK complex, leading to NF-kappa-B activation. In osmotic stress signaling, plays a major role in the activation of MAPK8/JNK1, but not that of NF-kappa-B. Promotes TRIM5 capsid-specific restriction activity. Phosphorylates RIPK1 at 'Ser-321' which positively regulates RIPK1 interaction with RIPK3 to promote necroptosis but negatively regulates RIPK1 kinase activity and its interaction with FADD to mediate apoptosis. Phosphorylates STING1 in response to cGAMP-activation, promoting association between STEEP1 and STING1 and STING1 translocation to COPII vesicles. The chain is Mitogen-activated protein kinase kinase kinase 7 (MAP3K7) from Pongo abelii (Sumatran orangutan).